A 215-amino-acid chain; its full sequence is Adenylate kinase (215 aa).

10-15 is an ATP binding site; the sequence is GAGKGT. Residues 30–59 are NMP; sequence STGDMFRAAMKNNTELGRKAKSFMDNGDLV. Residues Thr-31, Arg-36, 57–59, 85–88, and Gln-92 contribute to the AMP site; these read DLV and GFPR. Residues 126 to 163 form an LID region; that stretch reads GRWICRTCGKTYHEIYNPPKVAGKCDLDGGELYQRDDD. Arg-127 serves as a coordination point for ATP. Zn(2+) contacts are provided by Cys-130 and Cys-133. 136–137 contributes to the ATP binding site; that stretch reads TY. The Zn(2+) site is built by Cys-150 and Asp-153. 2 residues coordinate AMP: Arg-160 and Arg-171. ATP is bound at residue Gln-199.

This sequence belongs to the adenylate kinase family. In terms of assembly, monomer.

The protein localises to the cytoplasm. The catalysed reaction is AMP + ATP = 2 ADP. It participates in purine metabolism; AMP biosynthesis via salvage pathway; AMP from ADP: step 1/1. In terms of biological role, catalyzes the reversible transfer of the terminal phosphate group between ATP and AMP. Plays an important role in cellular energy homeostasis and in adenine nucleotide metabolism. The sequence is that of Adenylate kinase from Listeria monocytogenes serotype 4a (strain HCC23).